The following is a 339-amino-acid chain: Pleckstrin homology domain protein opy1 (339 aa).

Positions 25 to 119 (RVLKSGWLIK…WVHVLRSTTG (95 aa)) constitute a PH 1 domain. Residues 141 to 167 (ESEPNVQISDTDFDNISTEPRNQTTSP) show a composition bias toward polar residues. A disordered region spans residues 141-170 (ESEPNVQISDTDFDNISTEPRNQTTSPLDL). Positions 233–330 (KVLMQGTIHW…WVAALKTSID (98 aa)) constitute a PH 2 domain.

Interacts (via domain PH 1) with phosphatidylinositol 4-phosphate 5-kinase its3; the interaction is direct but opy1 does not appear to regulate its3 localization or function.

It is found in the cell tip. The protein resides in the cell membrane. Binds phosphatidylinositol 4,5-bisphosphate (PtdIns(4,5)P2/PIP2) at the cell membrane. The protein is Pleckstrin homology domain protein opy1 of Schizosaccharomyces pombe (strain 972 / ATCC 24843) (Fission yeast).